A 247-amino-acid chain; its full sequence is Probable enoyl-CoA hydratase echA6 (247 aa).

Belongs to the enoyl-CoA hydratase/isomerase family.

It catalyses the reaction a (3S)-3-hydroxyacyl-CoA = a (2E)-enoyl-CoA + H2O. The enzyme catalyses a 4-saturated-(3S)-3-hydroxyacyl-CoA = a (3E)-enoyl-CoA + H2O. In terms of biological role, could possibly oxidize fatty acids using specific components. The sequence is that of Probable enoyl-CoA hydratase echA6 (echA6) from Mycobacterium leprae (strain TN).